Reading from the N-terminus, the 210-residue chain is Protein VNG_2543C (210 aa).

The region spanning 12–206 (EDGARTVELA…ETGDEDDPVE (195 aa)) is the AMMECR1 domain.

The sequence is that of Protein VNG_2543C from Halobacterium salinarum (strain ATCC 700922 / JCM 11081 / NRC-1) (Halobacterium halobium).